The sequence spans 278 residues: Serine/threonine-protein phosphatase PGAM5, mitochondrial (278 aa).

A helical membrane pass occupies residues 7–27 (LIAGGSAAAAAAAILGAAAVG).

Belongs to the phosphoglycerate mutase family. BPG-dependent PGAM subfamily. In terms of processing, phosphorylated by the RIPK1/RIPK3 complex under necrotic conditions. This phosphorylation increases PGAM5 phosphatase activity.

The protein resides in the mitochondrion outer membrane. The enzyme catalyses O-phospho-L-seryl-[protein] + H2O = L-seryl-[protein] + phosphate. The catalysed reaction is O-phospho-L-threonyl-[protein] + H2O = L-threonyl-[protein] + phosphate. Functionally, displays phosphatase activity for serine/threonine residues. Has apparently no phosphoglycerate mutase activity. May be regulator of mitochondrial dynamics. May be a central mediator for programmed necrosis. The protein is Serine/threonine-protein phosphatase PGAM5, mitochondrial (pgam5) of Xenopus tropicalis (Western clawed frog).